A 312-amino-acid polypeptide reads, in one-letter code: Acetyl-coenzyme A carboxylase carboxyl transferase subunit alpha (312 aa).

The CoA carboxyltransferase C-terminal domain maps to 36–286; the sequence is NLEKEISKTY…ADYVKKSLNE (251 aa).

This sequence belongs to the AccA family. In terms of assembly, acetyl-CoA carboxylase is a heterohexamer composed of biotin carboxyl carrier protein (AccB), biotin carboxylase (AccC) and two subunits each of ACCase subunit alpha (AccA) and ACCase subunit beta (AccD).

Its subcellular location is the cytoplasm. The catalysed reaction is N(6)-carboxybiotinyl-L-lysyl-[protein] + acetyl-CoA = N(6)-biotinyl-L-lysyl-[protein] + malonyl-CoA. The protein operates within lipid metabolism; malonyl-CoA biosynthesis; malonyl-CoA from acetyl-CoA: step 1/1. Component of the acetyl coenzyme A carboxylase (ACC) complex. First, biotin carboxylase catalyzes the carboxylation of biotin on its carrier protein (BCCP) and then the CO(2) group is transferred by the carboxyltransferase to acetyl-CoA to form malonyl-CoA. The polypeptide is Acetyl-coenzyme A carboxylase carboxyl transferase subunit alpha (Campylobacter jejuni subsp. doylei (strain ATCC BAA-1458 / RM4099 / 269.97)).